The chain runs to 298 residues: Tritrans,polycis-undecaprenyl-diphosphate synthase (geranylgeranyl-diphosphate specific) (298 aa).

Aspartate 35 is an active-site residue. A Mg(2+)-binding site is contributed by aspartate 35. Residues 36-39 (GNRR), arginine 48, histidine 52, and 80-82 (STE) each bind substrate. Asparagine 83 serves as the catalytic Proton acceptor. Substrate-binding positions include phenylalanine 84, arginine 86, arginine 208, and 214 to 216 (RIS).

Belongs to the UPP synthase family. As to quaternary structure, homodimer. It depends on Mg(2+) as a cofactor.

The catalysed reaction is geranylgeranyl diphosphate + 7 isopentenyl diphosphate = tri-trans,hepta-cis-undecaprenyl diphosphate + 7 diphosphate. Functionally, catalyzes the sequential condensation of isopentenyl diphosphate (IPP) with geranylgeranyl diphosphate (GGPP) to yield (2Z,6Z,10Z,14Z,18Z,22Z,26Z,30E,34E,38E)-undecaprenyl diphosphate (tritrans,heptacis-UPP). It is probably the precursor of glycosyl carrier lipids. The polypeptide is Tritrans,polycis-undecaprenyl-diphosphate synthase (geranylgeranyl-diphosphate specific) (Methanosarcina mazei (strain ATCC BAA-159 / DSM 3647 / Goe1 / Go1 / JCM 11833 / OCM 88) (Methanosarcina frisia)).